A 557-amino-acid chain; its full sequence is Dicarboxylate transporter 1, chloroplastic (557 aa).

Residues methionine 1–valine 69 constitute a chloroplast transit peptide. 12 consecutive transmembrane segments (helical) span residues alanine 90–valine 110, leucine 122–valine 142, phenylalanine 158–phenylalanine 178, alanine 229–glycine 249, leucine 256–leucine 276, alanine 305–tyrosine 325, isoleucine 355–valine 375, aspartate 376–tryptophan 396, tryptophan 411–phenylalanine 431, phenylalanine 438–phenylalanine 458, alanine 477–alanine 497, and tyrosine 531–tryptophan 551.

Belongs to the SLC13A/DASS transporter (TC 2.A.47) family. DIT1 subfamily. As to expression, expressed in roots, rosette and cauline leaves, stems, flowers and siliques.

The protein resides in the plastid. The protein localises to the chloroplast inner membrane. Its function is as follows. 2-oxoglutarate/malate translocator involved with DIT2-1 in primary ammonia assimilation and in the re-assimilation of ammonia generated by the photorespiratory pathway. Imports 2-oxoglutarate into plastids as precursor for ammonia assimilation. 2-oxoglutarate is converted to glutamate, the end product of ammonia assimilation, which is exported to the cytosol by DIT2-1. The protein is Dicarboxylate transporter 1, chloroplastic (DIT1) of Arabidopsis thaliana (Mouse-ear cress).